Here is a 254-residue protein sequence, read N- to C-terminus: Enolase-phosphatase E1 (254 aa).

Residues D13 and E15 each coordinate Mg(2+). Substrate-binding positions include 127–128 (SS) and K173. A Mg(2+)-binding site is contributed by D200.

This sequence belongs to the HAD-like hydrolase superfamily. MasA/MtnC family. Monomer. Mg(2+) serves as cofactor.

The protein localises to the cytoplasm. It localises to the nucleus. It catalyses the reaction 5-methylsulfanyl-2,3-dioxopentyl phosphate + H2O = 1,2-dihydroxy-5-(methylsulfanyl)pent-1-en-3-one + phosphate. The protein operates within amino-acid biosynthesis; L-methionine biosynthesis via salvage pathway; L-methionine from S-methyl-5-thio-alpha-D-ribose 1-phosphate: step 3/6. It participates in amino-acid biosynthesis; L-methionine biosynthesis via salvage pathway; L-methionine from S-methyl-5-thio-alpha-D-ribose 1-phosphate: step 4/6. Functionally, bifunctional enzyme that catalyzes the enolization of 2,3-diketo-5-methylthiopentyl-1-phosphate (DK-MTP-1-P) into the intermediate 2-hydroxy-3-keto-5-methylthiopentenyl-1-phosphate (HK-MTPenyl-1-P), which is then dephosphorylated to form the acireductone 1,2-dihydroxy-3-keto-5-methylthiopentene (DHK-MTPene). The chain is Enolase-phosphatase E1 (utr4) from Sclerotinia sclerotiorum (strain ATCC 18683 / 1980 / Ss-1) (White mold).